Reading from the N-terminus, the 320-residue chain is Ferrochelatase (320 aa).

The Fe cation site is built by histidine 194 and glutamate 275.

Belongs to the ferrochelatase family.

It is found in the cytoplasm. It catalyses the reaction heme b + 2 H(+) = protoporphyrin IX + Fe(2+). It functions in the pathway porphyrin-containing compound metabolism; protoheme biosynthesis; protoheme from protoporphyrin-IX: step 1/1. Its function is as follows. Catalyzes the ferrous insertion into protoporphyrin IX. The sequence is that of Ferrochelatase from Yersinia pestis bv. Antiqua (strain Antiqua).